The primary structure comprises 218 residues: Peptide methionine sulfoxide reductase A2 (218 aa).

Positions 1–19 (MDSSLKTQEPQVVETSPSP) are enriched in polar residues. Residues 1–30 (MDSSLKTQEPQVVETSPSPVAQEPPQVADK) form a disordered region. Serine 205 carries the post-translational modification Phosphoserine.

It belongs to the MsrA Met sulfoxide reductase family.

Its subcellular location is the cytoplasm. It localises to the cytosol. It carries out the reaction L-methionyl-[protein] + [thioredoxin]-disulfide + H2O = L-methionyl-(S)-S-oxide-[protein] + [thioredoxin]-dithiol. The catalysed reaction is [thioredoxin]-disulfide + L-methionine + H2O = L-methionine (S)-S-oxide + [thioredoxin]-dithiol. Activated during dark in short day conditions. Catalyzes the reduction of methionine sulfoxide (MetSO) to methionine in proteins. Plays a protective role against oxidative stress by restoring activity to proteins that have been inactivated by methionine oxidation. Prevents cellular oxidative damage in long nights. MSRA family specifically reduces the MetSO S-enantiomer. In Arabidopsis thaliana (Mouse-ear cress), this protein is Peptide methionine sulfoxide reductase A2 (MRSA2).